A 94-amino-acid chain; its full sequence is MSRECELTGTKPMVGNIVSHSQIKTKRRYLPNLVQVTLRSEALDQNFRMRIAAKALRTVDKLGGLDAFLAKAKEEGLSTKALKIKRDIAKKAVA.

The protein belongs to the bacterial ribosomal protein bL28 family.

The polypeptide is Large ribosomal subunit protein bL28 (Hyphomonas neptunium (strain ATCC 15444)).